Consider the following 299-residue polypeptide: N-acetylmuramic acid 6-phosphate etherase (299 aa).

One can recognise an SIS domain in the interval 54-217 (TIAQYKKGGR…STITMVGVGK (164 aa)). Residue Glu-82 is the Proton donor of the active site. Residue Glu-113 is part of the active site.

The protein belongs to the GCKR-like family. MurNAc-6-P etherase subfamily. Homodimer.

It carries out the reaction N-acetyl-D-muramate 6-phosphate + H2O = N-acetyl-D-glucosamine 6-phosphate + (R)-lactate. The protein operates within amino-sugar metabolism; N-acetylmuramate degradation. Specifically catalyzes the cleavage of the D-lactyl ether substituent of MurNAc 6-phosphate, producing GlcNAc 6-phosphate and D-lactate. The chain is N-acetylmuramic acid 6-phosphate etherase from Staphylococcus aureus (strain bovine RF122 / ET3-1).